The sequence spans 281 residues: Urease accessory protein UreD (281 aa).

The segment at 1–25 (MLNTLEPQPCETDALSPRLQRSTGS) is disordered.

Belongs to the UreD family. As to quaternary structure, ureD, UreF and UreG form a complex that acts as a GTP-hydrolysis-dependent molecular chaperone, activating the urease apoprotein by helping to assemble the nickel containing metallocenter of UreC. The UreE protein probably delivers the nickel.

The protein localises to the cytoplasm. Functionally, required for maturation of urease via the functional incorporation of the urease nickel metallocenter. The chain is Urease accessory protein UreD from Dinoroseobacter shibae (strain DSM 16493 / NCIMB 14021 / DFL 12).